A 204-amino-acid chain; its full sequence is Holliday junction branch migration complex subunit RuvA (204 aa).

A domain I region spans residues 1–64 (MIGRLRGVVI…EDAQLLYGFN (64 aa)). The interval 65–143 (HKQERALFRE…GWVSHDLFSP (79 aa)) is domain II. The flexible linker stretch occupies residues 144–155 (AEISLPARESVL). Residues 156–204 (RAPDSSEEAASALVALGYKPQQASQIVSKIAKEGMSVEDIIRESLRSLV) form a domain III region.

This sequence belongs to the RuvA family. In terms of assembly, homotetramer. Forms an RuvA(8)-RuvB(12)-Holliday junction (HJ) complex. HJ DNA is sandwiched between 2 RuvA tetramers; dsDNA enters through RuvA and exits via RuvB. An RuvB hexamer assembles on each DNA strand where it exits the tetramer. Each RuvB hexamer is contacted by two RuvA subunits (via domain III) on 2 adjacent RuvB subunits; this complex drives branch migration. In the full resolvosome a probable DNA-RuvA(4)-RuvB(12)-RuvC(2) complex forms which resolves the HJ.

It is found in the cytoplasm. In terms of biological role, the RuvA-RuvB-RuvC complex processes Holliday junction (HJ) DNA during genetic recombination and DNA repair, while the RuvA-RuvB complex plays an important role in the rescue of blocked DNA replication forks via replication fork reversal (RFR). RuvA specifically binds to HJ cruciform DNA, conferring on it an open structure. The RuvB hexamer acts as an ATP-dependent pump, pulling dsDNA into and through the RuvAB complex. HJ branch migration allows RuvC to scan DNA until it finds its consensus sequence, where it cleaves and resolves the cruciform DNA. This is Holliday junction branch migration complex subunit RuvA from Aeromonas salmonicida (strain A449).